The primary structure comprises 438 residues: Transmembrane protein 184C (438 aa).

Helical transmembrane passes span 17-37, 48-68, 86-106, 179-199, 212-232, 254-274, and 287-307; these read LVAV…VWEL, AWFI…WVIL, ILWM…YPGI, YTVV…LGIY, YLVI…LLFY, VVFV…VGVI, and AVAT…AAIA. Residues 358-438 are disordered; that stretch reads PRKKLFPEDQ…KEPSDKSVDS (81 aa). Composition is skewed to low complexity over residues 374-390 and 404-413; these read SLLS…ASSM and TVTPQTTPTT. Position 422 is a phosphoserine (Ser422). Positions 425–438 are enriched in basic and acidic residues; that stretch reads IGEKKEPSDKSVDS.

This sequence belongs to the TMEM184 family.

The protein resides in the membrane. Possible tumor suppressor which may play a role in cell growth. The sequence is that of Transmembrane protein 184C (TMEM184C) from Pongo abelii (Sumatran orangutan).